The primary structure comprises 143 residues: MAALVRGLMRRVAALPQAVRSVSGGGQRHEPYRPLPITSPLAGLPRNFRVREPPKPQKVDRWTEKRALFGVYDNVGILGGFQIHPKHLIMGPKWLRGWRGNELQRCIRKKQMVGDRMFMDDYHNLKKRIRFLYKRFNRTGKHR.

The N-terminal 52 residues, 1 to 52 (MAALVRGLMRRVAALPQAVRSVSGGGQRHEPYRPLPITSPLAGLPRNFRVRE), are a transit peptide targeting the mitochondrion.

Belongs to the mitochondrion-specific ribosomal protein mL51 family. As to quaternary structure, component of the mitochondrial ribosome large subunit (39S) which comprises a 16S rRNA and about 50 distinct proteins.

Its subcellular location is the mitochondrion. In Gallus gallus (Chicken), this protein is Large ribosomal subunit protein mL51 (MRPL51).